A 260-amino-acid polypeptide reads, in one-letter code: MAFVPPQAGYDRAITVFSPDGRLFQVNYAREAVKRGATAVGVKWKDGVVLAVEKRITSKLIEPSSYEKIFLIDDHIAAAPSGIIADARVLVDRARLEAQIYRLTYGEPVPLTVLVKKICDLKQAHTQYGGVRPFGAALLMAGVNEKPELFETDPSGAYFEWKAVAIGSGRNTAMAIFEEHYRDDIGKDDAIKLAILALAKTLEEPTAEGIEVAYITMDEKRWKKLPREELEKYINEILQEVKEEEVEEKQEDYSELDQNY.

The protein belongs to the peptidase T1A family. The 20S proteasome core is composed of 14 alpha and 14 beta subunits that assemble into four stacked heptameric rings, resulting in a barrel-shaped structure. The two inner rings, each composed of seven catalytic beta subunits, are sandwiched by two outer rings, each composed of seven alpha subunits. The catalytic chamber with the active sites is on the inside of the barrel. Has a gated structure, the ends of the cylinder being occluded by the N-termini of the alpha-subunits. Is capped at one or both ends by the proteasome regulatory ATPase, PAN.

The protein resides in the cytoplasm. Its activity is regulated as follows. The formation of the proteasomal ATPase PAN-20S proteasome complex, via the docking of the C-termini of PAN into the intersubunit pockets in the alpha-rings, triggers opening of the gate for substrate entry. Interconversion between the open-gate and close-gate conformations leads to a dynamic regulation of the 20S proteasome proteolysis activity. In terms of biological role, component of the proteasome core, a large protease complex with broad specificity involved in protein degradation. This Thermococcus kodakarensis (strain ATCC BAA-918 / JCM 12380 / KOD1) (Pyrococcus kodakaraensis (strain KOD1)) protein is Proteasome subunit alpha.